Here is a 304-residue protein sequence, read N- to C-terminus: Uricase (304 aa).

Alanine 2 is subject to N-acetylalanine. Lysine 10 and lysine 23 each carry N6-acetyllysine; alternate. N6-succinyllysine; alternate occurs at positions 10 and 23. The active-site Charge relay system is lysine 23. Lysine 27 and lysine 36 each carry N6-acetyllysine. Serine 39 and serine 63 each carry phosphoserine. The Charge relay system role is filled by threonine 68. Positions 68 and 69 each coordinate urate. N6-acetyllysine is present on residues lysine 118, lysine 122, and lysine 164. Position 170 (phenylalanine 170) interacts with urate. N6-acetyllysine occurs at positions 175 and 185. Arginine 187 contacts urate. N6-acetyllysine; alternate occurs at positions 221 and 228. An N6-succinyllysine; alternate mark is found at lysine 221 and lysine 228. Serine 232 bears the Phosphoserine mark. Urate contacts are provided by valine 235, glutamine 236, and asparagine 262. Histidine 264 (charge relay system) is an active-site residue. Lysine 278 bears the N6-acetyllysine mark. A Phosphotyrosine modification is found at tyrosine 289. Positions 302–304 match the Microbody targeting signal motif; that stretch reads SKL.

The protein belongs to the uricase family.

It localises to the peroxisome. It catalyses the reaction urate + O2 + H2O = 5-hydroxyisourate + H2O2. It functions in the pathway purine metabolism; urate degradation; (S)-allantoin from urate: step 1/3. Functionally, catalyzes the oxidation of uric acid to 5-hydroxyisourate, which is further processed to form (S)-allantoin. The sequence is that of Uricase (UOX) from Canis lupus familiaris (Dog).